Here is a 505-residue protein sequence, read N- to C-terminus: Glutamate--tRNA ligase (505 aa).

Residues 12 to 22 (PSPTGDPHVGT) carry the 'HIGH' region motif. Positions 253–257 (KLSKR) match the 'KMSKS' region motif. K256 serves as a coordination point for ATP.

Belongs to the class-I aminoacyl-tRNA synthetase family. Glutamate--tRNA ligase type 1 subfamily. As to quaternary structure, monomer.

The protein localises to the cytoplasm. It catalyses the reaction tRNA(Glu) + L-glutamate + ATP = L-glutamyl-tRNA(Glu) + AMP + diphosphate. Its function is as follows. Catalyzes the attachment of glutamate to tRNA(Glu) in a two-step reaction: glutamate is first activated by ATP to form Glu-AMP and then transferred to the acceptor end of tRNA(Glu). This is Glutamate--tRNA ligase from Chlamydia abortus (strain DSM 27085 / S26/3) (Chlamydophila abortus).